A 188-amino-acid chain; its full sequence is Elongation factor P (188 aa).

This sequence belongs to the elongation factor P family.

The protein resides in the cytoplasm. It participates in protein biosynthesis; polypeptide chain elongation. In terms of biological role, involved in peptide bond synthesis. Stimulates efficient translation and peptide-bond synthesis on native or reconstituted 70S ribosomes in vitro. Probably functions indirectly by altering the affinity of the ribosome for aminoacyl-tRNA, thus increasing their reactivity as acceptors for peptidyl transferase. This chain is Elongation factor P, found in Exiguobacterium sp. (strain ATCC BAA-1283 / AT1b).